A 426-amino-acid chain; its full sequence is Tol-Pal system protein TolB (426 aa).

The N-terminal stretch at 1-24 (MKLKSRYTSLISVVSIFFSSMVMA) is a signal peptide.

This sequence belongs to the TolB family. As to quaternary structure, the Tol-Pal system is composed of five core proteins: the inner membrane proteins TolA, TolQ and TolR, the periplasmic protein TolB and the outer membrane protein Pal. They form a network linking the inner and outer membranes and the peptidoglycan layer.

The protein resides in the periplasm. Part of the Tol-Pal system, which plays a role in outer membrane invagination during cell division and is important for maintaining outer membrane integrity. The protein is Tol-Pal system protein TolB of Haemophilus ducreyi (strain 35000HP / ATCC 700724).